A 178-amino-acid chain; its full sequence is MKFLLNSIPTISFFIFYKFYDIFIASFSLMIASLFTFIITSILFNSINKHDLINLIFVIVFGFLTLFYHNSSYIKWKVTIIYFLISIVFLINYLFIKNNLLNIIFKNTIQLSKNVWRKLSLFWSIFFLICAVSNTYIILYFSEQTWVTFKIFGLTILTLIAVIINGFYIYFLKSKIIQ.

5 helical membrane-spanning segments follow: residues 22–42, 52–72, 76–96, 121–141, and 151–171; these read IFIA…ITSI, LINL…HNSS, WKVT…YLFI, LFWS…ILYF, and IFGL…YIYF.

It belongs to the YciB family.

It is found in the cell membrane. Its function is as follows. Plays a role in cell envelope biogenesis, maintenance of cell envelope integrity and membrane homeostasis. The chain is Membrane-spanning protein YciB from Buchnera aphidicola subsp. Baizongia pistaciae (strain Bp).